Here is a 102-residue protein sequence, read N- to C-terminus: Small ribosomal subunit protein uS10 (102 aa).

The protein belongs to the universal ribosomal protein uS10 family. In terms of assembly, part of the 30S ribosomal subunit.

Its function is as follows. Involved in the binding of tRNA to the ribosomes. The polypeptide is Small ribosomal subunit protein uS10 (Streptococcus pyogenes serotype M3 (strain SSI-1)).